A 250-amino-acid chain; its full sequence is Cyclin-Q (250 aa).

Met1 is modified (N-acetylmethionine). The segment covering 1 to 10 (MEAVRPDSCE) has biased composition (basic and acidic residues). Residues 1-22 (MEAVRPDSCERGTAAARAEERP) are disordered.

Belongs to the cyclin family. Cyclin-like FAM58 subfamily. As to quaternary structure, associates with CDK10 to promote its kinase activity.

Functionally, activating cyclin for the cyclin-associated kinase CDK10. This is Cyclin-Q (Ccnq) from Rattus norvegicus (Rat).